We begin with the raw amino-acid sequence, 131 residues long: Interleukin-13 (131 aa).

Residues 1–18 form the signal peptide; the sequence is MALWVTAVLALACLGGLA. N-linked (GlcNAc...) asparagine glycans are attached at residues Asn42, Asn52, and Asn75. Disulfide bonds link Cys51–Cys79 and Cys67–Cys93.

It belongs to the IL-4/IL-13 family. Interacts with IL13RA2.

It is found in the secreted. In terms of biological role, cytokine that plays important roles in allergic inflammation and immune response to parasite infection. Synergizes with IL2 in regulating interferon-gamma synthesis. Stimulates B-cell proliferation, and activation of eosinophils, basophils, and mast cells. Plays an important role in controlling IL33 activity by modulating the production of transmembrane and soluble forms of interleukin-1 receptor-like 1/IL1RL1. Displays the capacity to antagonize Th1-driven proinflammatory immune response and downregulates synthesis of many proinflammatory cytokines including IL1, IL6, IL10, IL12 and TNF-alpha through a mechanism that partially involves suppression of NF-kappa-B. Also functions on nonhematopoietic cells, including endothelial cells where it induces vascular cell adhesion protein 1/VCAM1, which is important in the recruitment of eosinophils. Exerts its biological effects through its receptors which comprises the IL4R chain and the IL13RA1 chain, to activate JAK1 and TYK2, leading to the activation of STAT6. Aside from IL13RA1, another receptor IL13RA2 acts as a high affinity decoy for IL13 and mediates internalization and depletion of extracellular IL13. The polypeptide is Interleukin-13 (Il13) (Mus musculus (Mouse)).